Here is a 360-residue protein sequence, read N- to C-terminus: Phenylalanine--tRNA ligase alpha subunit (360 aa).

Glu260 provides a ligand contact to Mg(2+).

This sequence belongs to the class-II aminoacyl-tRNA synthetase family. Phe-tRNA synthetase alpha subunit type 1 subfamily. In terms of assembly, tetramer of two alpha and two beta subunits. Mg(2+) serves as cofactor.

The protein localises to the cytoplasm. The catalysed reaction is tRNA(Phe) + L-phenylalanine + ATP = L-phenylalanyl-tRNA(Phe) + AMP + diphosphate + H(+). The protein is Phenylalanine--tRNA ligase alpha subunit of Rhizobium johnstonii (strain DSM 114642 / LMG 32736 / 3841) (Rhizobium leguminosarum bv. viciae).